The primary structure comprises 419 residues: Transcription factor 7 (419 aa).

Gly residues predominate over residues 1–12 (MPQLDSGGGGAG). The segment at 1-60 (MPQLDSGGGGAGRGDDLGAPDELLAFQDEGEEQDDKNRDSPVGPERDLAELKSSLVNESE) is CTNNB1-binding. Disordered regions lie at residues 1-111 (MPQL…LKAP) and 134-200 (PASG…SGFY). Basic and acidic residues-rich tracts occupy residues 35–50 (DKNRDSPVGPERDLAE) and 86–109 (LGREHTSQRLFPDKLPESLEDGLK). Positions 143–158 (QPQPPLHNKPGQPPHG) are enriched in pro residues. The HMG box DNA-binding region spans 304–372 (IKKPLNAFML…LHMQLYPGWS (69 aa)). The interval 374 to 406 (RDNYGKKKRRSREKHQESTTGGKRNAFGTYPEK) is disordered. Residues 379 to 385 (KKKRRSR) carry the Nuclear localization signal motif.

Belongs to the TCF/LEF family. In terms of assembly, binds the armadillo repeat of CTNNB1 and forms a stable complex. Binds TLE5, TLE1, TLE2, TLE3 and TLE4. Interacts with MLLT11. Interacts with DAZAP2. As to quaternary structure, interacts (via N-terminus) with SOX13; inhibits WNT-mediated transcriptional activity. As to expression, T-cell specific. Expressed in triple negative 2 subpopulations of T-cells and both the gamma-delta and alpha-beta T-cell lineages. Expressed in Il7 receptor positive innate-like T-cells in the mesenteric lymph nodes and spleen (at protein level).

The protein resides in the nucleus. Transcriptional activator involved in T-cell lymphocyte differentiation. Necessary for the survival of CD4(+) CD8(+) immature thymocytes. Isoforms lacking the N-terminal CTNNB1 binding domain cannot fulfill this role. Binds to the T-lymphocyte-specific enhancer element (5'-WWCAAAG-3') found in the promoter of the CD3E gene. Represses expression of the T-cell receptor gamma gene in alpha-beta T-cell lineages. Inhibits the developmental program of IL17A effector gamma-delta T-cell subsets via regulating the transcription of T-cell lineage effector proteins. Required for the development of natural killer receptor-positive lymphoid tissue inducer T-cells. TLE1, TLE2, TLE3 and TLE4 repress transactivation mediated by TCF7 and CTNNB1. May also act as feedback transcriptional repressor of CTNNB1 and TCF7L2 target genes. This chain is Transcription factor 7, found in Mus musculus (Mouse).